The primary structure comprises 966 residues: Dynamin-like GTPase OPA1, mitochondrial (966 aa).

Residues 1–86 constitute a mitochondrion transit peptide; sequence MLRAGSVVTC…GGHGYQQHRT (86 aa). Topologically, residues 87-95 are mitochondrial matrix; it reads FWVARLAAR. The chain crosses the membrane as a helical span at residues 96-112; it reads LLKLRYILLGSAVGGGY. The Mitochondrial intermembrane segment spans residues 113 to 776; that stretch reads TAKKTYDEWK…SVIADMVGPD (664 aa). The disordered stretch occupies residues 189–217; it reads ESALRAPDVPPASAAMADSGDKQFKKSSD. The segment covering 207–217 has biased composition (basic and acidic residues); the sequence is SGDKQFKKSSD. Residues 213–259 are a coiled coil; that stretch reads KKSSDKEKVDQLQEELLRTQLKYQRMLERLEKENKELRKVVLQKDDK. The region spanning 291 to 567 is the Dynamin-type G domain; the sequence is QDHLPRVVVV…FWKMVRESVE (277 aa). A G1 motif region spans residues 301 to 308; that stretch reads GDQSAGKT. GTP-binding residues include Ser-304, Gly-306, Lys-307, Thr-308, Ser-309, and Gly-323. Residue Thr-308 coordinates Mg(2+). A G2 motif region spans residues 327–330; it reads MMTR. 2 residues coordinate Mg(2+): Thr-329 and Asp-404. The interval 404–407 is G3 motif; it reads DLPG. Residues 473–476 are G4 motif; the sequence is TKVD. Residues Lys-474, Asp-476, and Thr-509 each coordinate GTP. The segment at 507-510 is G5 motif; that stretch reads VVTG. Stalk region regions lie at residues 595–842 and 880–934; these read DRNE…IKDT and CNDV…VQLI. Residues 742–862 are paddle region; that stretch reads TDKPQWDAAI…QKALLHCNLC (121 aa). Residues 777–787 lie within the membrane without spanning it; that stretch reads WKQRWMSWKNR. Over 788–966 the chain is Mitochondrial intermembrane; it reads TPEQHTRNET…AFIEALHKEK (179 aa). An intrachain disulfide couples Cys-862 to Cys-880. A coiled-coil region spans residues 901–966; that stretch reads RQQLTNTEVR…AFIEALHKEK (66 aa).

The protein belongs to the TRAFAC class dynamin-like GTPase superfamily. Dynamin/Fzo/YdjA family. Oligomeric complex consisting of membrane-bound and soluble forms of OPA1. In terms of processing, cleaved by OMA1 or YME1L downstream of the transmembrane region in response to different signals to generate soluble forms. Cleaved by OMA1 at position S1 following stress conditions, generating the short soluble form (Dynamin-like GTPase OPA1, short form; S-OPA1).

The protein resides in the mitochondrion inner membrane. Its subcellular location is the mitochondrion intermembrane space. The catalysed reaction is GTP + H2O = GDP + phosphate + H(+). In terms of biological role, dynamin-related GTPase that is essential for normal mitochondrial morphology by mediating fusion of the mitochondrial inner membranes, regulating cristae morphology and maintaining respiratory chain function. Exists in two forms: the transmembrane, long form (Dynamin-like GTPase OPA1, long form; L-OPA1), which is tethered to the inner mitochondrial membrane, and the short soluble form (Dynamin-like GTPase OPA1, short form; S-OPA1), which results from proteolytic cleavage and localizes in the intermembrane space. Both forms (L-OPA1 and S-OPA1) cooperate to catalyze the fusion of the mitochondrial inner membrane. The equilibrium between L-OPA1 and S-OPA1 is essential: excess levels of S-OPA1, produced by cleavage by OMA1 following loss of mitochondrial membrane potential, lead to an impaired equilibrium between L-OPA1 and S-OPA1, inhibiting mitochondrial fusion. The balance between L-OPA1 and S-OPA1 also influences cristae shape and morphology. Its role in mitochondrial morphology is required for mitochondrial genome maintenance. Functionally, constitutes the transmembrane long form (L-OPA1) that plays a central role in mitochondrial inner membrane fusion and cristae morphology. L-OPA1 and the soluble short form (S-OPA1) form higher-order helical assemblies that coordinate the fusion of mitochondrial inner membranes. Inner membrane-anchored L-OPA1 molecules initiate membrane remodeling by recruiting soluble S-OPA1 to rapidly polymerize into a flexible cylindrical scaffold encaging the mitochondrial inner membrane. Once at the membrane surface, the formation of S-OPA1 helices induce bilayer curvature. OPA1 dimerization through the paddle region, which inserts into cardiolipin-containing membrane, promotes GTP hydrolysis and the helical assembly of a flexible OPA1 lattice on the membrane, which drives membrane curvature and mitochondrial fusion. Plays a role in the maintenance and remodeling of mitochondrial cristae, some invaginations of the mitochondrial inner membrane that provide an increase in the surface area. Probably acts by forming helical filaments at the inside of inner membrane tubes with the shape and dimensions of crista junctions. Constitutes the soluble short form (S-OPA1) generated by cleavage by OMA1, which plays a central role in mitochondrial inner membrane fusion and cristae morphology. The transmembrane long form (L-OPA1) and the S-OPA1 form higher-order helical assemblies that coordinate the fusion of mitochondrial inner membranes. Inner membrane-anchored L-OPA1 molecules initiate membrane remodeling by recruiting soluble S-OPA1 to rapidly polymerize into a flexible cylindrical scaffold encaging the mitochondrial inner membrane. Once at the membrane surface, the formation of S-OPA1 helices induce bilayer curvature. OPA1 dimerization through the paddle region, which inserts into cardiolipin-containing membrane, promotes GTP hydrolysis and the helical assembly of a flexible OPA1 lattice on the membrane, which drives membrane curvature and mitochondrial fusion. Excess levels of S-OPA1 produced by cleavage by OMA1 following stress conditions that induce loss of mitochondrial membrane potential, lead to an impaired equilibrium between L-OPA1 and S-OPA1, thereby inhibiting mitochondrial fusion. Plays a role in the maintenance and remodeling of mitochondrial cristae, some invaginations of the mitochondrial inner membrane that provide an increase in the surface area. Probably acts by forming helical filaments at the inside of inner membrane tubes with the shape and dimensions of crista junctions. The polypeptide is Dynamin-like GTPase OPA1, mitochondrial (Danio rerio (Zebrafish)).